We begin with the raw amino-acid sequence, 196 residues long: Holliday junction branch migration complex subunit RuvA (196 aa).

The tract at residues 1-63 (MLDFIKGEIV…EETHQLFGFI (63 aa)) is domain I. A domain II region spans residues 64–142 (DKKERQLFTH…PDNIPSSDTI (79 aa)). Residues 143-146 (ITNI) form a flexible linker region. Positions 146–196 (ISSNITKEAITALITLGFSQSASQKVVNKIVSNNSSSTTIEQIIKKALKLL) are domain III.

Belongs to the RuvA family. As to quaternary structure, homotetramer. Forms an RuvA(8)-RuvB(12)-Holliday junction (HJ) complex. HJ DNA is sandwiched between 2 RuvA tetramers; dsDNA enters through RuvA and exits via RuvB. An RuvB hexamer assembles on each DNA strand where it exits the tetramer. Each RuvB hexamer is contacted by two RuvA subunits (via domain III) on 2 adjacent RuvB subunits; this complex drives branch migration. In the full resolvosome a probable DNA-RuvA(4)-RuvB(12)-RuvC(2) complex forms which resolves the HJ.

It is found in the cytoplasm. Its function is as follows. The RuvA-RuvB-RuvC complex processes Holliday junction (HJ) DNA during genetic recombination and DNA repair, while the RuvA-RuvB complex plays an important role in the rescue of blocked DNA replication forks via replication fork reversal (RFR). RuvA specifically binds to HJ cruciform DNA, conferring on it an open structure. The RuvB hexamer acts as an ATP-dependent pump, pulling dsDNA into and through the RuvAB complex. HJ branch migration allows RuvC to scan DNA until it finds its consensus sequence, where it cleaves and resolves the cruciform DNA. In Azobacteroides pseudotrichonymphae genomovar. CFP2, this protein is Holliday junction branch migration complex subunit RuvA.